A 1333-amino-acid polypeptide reads, in one-letter code: Elongator complex protein 1 (1333 aa).

Phosphoserine occurs at positions 805, 1172, and 1175. The segment at 886 to 1333 (VDVNELFNHS…RSQWKLSLLE (448 aa)) is mediates dimerization. The interval 1175–1209 (SGSEMSGRYSHSNSRISARSSKNRRKAERKKHSLK) is disordered. The tract at residues 1192-1210 (ARSSKNRRKAERKKHSLKE) is required for binding to tRNA. Residues 1195–1207 (SKNRRKAERKKHS) show a composition bias toward basic residues.

It belongs to the ELP1/IKA1 family. As to quaternary structure, homodimer; dimerization promotes ELP1 stability and elongator complex formation. Component of the elongator complex which consists of ELP1, ELP2, ELP3, ELP4, ELP5 and ELP6. Interacts preferentially with MAP3K14/NIK followed by IKK-alpha and IKK-beta. In terms of processing, phosphorylated. In the testis, expression is restricted to germ cells during spermatogenesis with no expression detected in somatic cells such as Sertoli cells or Leydig cells (at protein level). In the ovary, expressed in oocytes of primary, secondary and antral follicles (at protein level). Widely expressed in adult tissues with highest levels in brain and also expressed at all embryonic stages.

The protein localises to the cytoplasm. Its subcellular location is the nucleus. Its pathway is tRNA modification; 5-methoxycarbonylmethyl-2-thiouridine-tRNA biosynthesis. Functionally, component of the elongator complex which is required for multiple tRNA modifications, including mcm5U (5-methoxycarbonylmethyl uridine), mcm5s2U (5-methoxycarbonylmethyl-2-thiouridine), and ncm5U (5-carbamoylmethyl uridine). The elongator complex catalyzes the formation of carboxymethyluridine in the wobble base at position 34 in tRNAs. Regulates the migration and branching of projection neurons in the developing cerebral cortex, through a process depending on alpha-tubulin acetylation. ELP1 binds to tRNA, mediating interaction of the elongator complex with tRNA. May act as a scaffold protein that assembles active IKK-MAP3K14 complexes (IKKA, IKKB and MAP3K14/NIK). The polypeptide is Elongator complex protein 1 (Elp1) (Mus musculus (Mouse)).